We begin with the raw amino-acid sequence, 612 residues long: RNA polymerase sigma factor RpoD (612 aa).

Residues 191–206 (QQNNEEDEENNQEDHE) show a composition bias toward acidic residues. The interval 191–210 (QQNNEEDEENNQEDHEDDHS) is disordered. The segment at 378–448 (MVEANLRLVI…TRSIADQART (71 aa)) is sigma-70 factor domain-2. The Interaction with polymerase core subunit RpoC motif lies at 402 to 405 (DLIQ). Residues 457–533 (ETINKLNRIS…DTTLELPLDS (77 aa)) are sigma-70 factor domain-3. Residues 546-599 (VLSGLTAREAKVLRMRFGIDMNTDHTLEEVGKQFDVTRERIRQIEAKALRKLRH) are sigma-70 factor domain-4. A DNA-binding region (H-T-H motif) is located at residues 572-591 (LEEVGKQFDVTRERIRQIEA).

This sequence belongs to the sigma-70 factor family. RpoD/SigA subfamily. In terms of assembly, interacts transiently with the RNA polymerase catalytic core.

It localises to the cytoplasm. Its function is as follows. Sigma factors are initiation factors that promote the attachment of RNA polymerase to specific initiation sites and are then released. This sigma factor is the primary sigma factor during exponential growth. In Buchnera aphidicola subsp. Acyrthosiphon pisum (strain APS) (Acyrthosiphon pisum symbiotic bacterium), this protein is RNA polymerase sigma factor RpoD.